Here is a 100-residue protein sequence, read N- to C-terminus: Defensin-6 (100 aa).

Residues 1-19 (MRTLTILTAVLLVALQAKA) form the signal peptide. Positions 20–68 (EPLQAEDDPLQAKAYEADAQEQRGANDQDFAVSFAEDASSSLRALGSTR) are excised as a propeptide. 3 cysteine pairs are disulfide-bonded: cysteine 72/cysteine 99, cysteine 74/cysteine 88, and cysteine 78/cysteine 98.

Belongs to the alpha-defensin family. Homodimer. Self-assembles into higher-order oligomers termed nanonets, fibril-like structures that entrap microbes. Self-assembly into nanonets seems to protect against proteolytic digestion in duodenal fluid. Interacts with Y.enterocolitica invasin and S.typhimurium fliC/flagellin; the interaction creates an anchoring site for progressive DEFA6 self-assembly into nanonets. Proteolytically cleaved by trypsin at Arg-68; the propeptide is stored in the tissue of the small intestine and the mature peptide is found in the luminal fluid; cleavage may occur during or after release into the lumen. The N-terminal propeptide region suppresses self-assembly and renders DEFA6 propeptide unable to agglutinate bacteria and protect human epithelial cells from bacterial invasion. Post-translationally, under reducing conditions, naturally present in the gut owing to the low redox potential or enzymatically generated by the thioredoxin system, the disulfide bridges are opened leading to a conformational change of DEF6, thereby changing its antimicrobial spectrum. The reduced form exhibits inhibitory activity against anaerobic bacteria, in contrast to the minimal antimicrobial activity of the disulfide-linked oxidized form. The formation of higher-order nanonets and bacterial entrapment is independent of the redox state. As to expression, expressed in Paneth cells of the small intestine (at protein level).

The protein localises to the secreted. It is found in the cytoplasmic vesicle. The protein resides in the secretory vesicle. Host-defense peptide that contributes to intestinal innate immunity and mediates homeostasis at mucosal surfaces by forming higher-order oligomers that capture bacteria and prevent microbial invasion of the epithelium. After binding to bacterial surface proteins, undergoes ordered self-assembly to form fibril-like nanonets that surround and entangle bacteria and thereby prevent bacterial invasion across the epithelial barrier. Entangles and agglutinates Gram-negative bacteria, such as E.coli, S.typhimurium and Y.enterocolitica, and Gram-positive bacteria such as L.monocytogenes, thereby protecting the intestine against invasion by enteric bacterial pathogens. Blocks adhesion of C.albicans to intestinal epithelial cells and thereby suppresses fungal invasion of epithelial cells and biofilm formation. Under reducing conditions and in an acidic environment similar to the intestinal milieu, exhibits inhibitory activity against anaerobic bacteria such as B.adolescentis, L.acidophilus and B.breve, as well as B.longum and S.thermophilus, possibly by leading to alterations in bacterial cell envelope structures. The disulfide-linked oxidized form exhibits negligible antimicrobial activity against Gram-negative and Gram-positive bacteria, as compared to the enteric defensin DEFA5. The protein is Defensin-6 (DEFA6) of Homo sapiens (Human).